The following is a 243-amino-acid chain: ATP synthase subunit a (243 aa).

Helical transmembrane passes span 29–49, 54–74, 89–109, 114–134, 141–161, 177–197, 200–220, and 221–241; these read NASLFMVLSTFLISLSCYVGL, VIPNPLQSIIEIIYDFIVSTI, VFTIFTFILVCNLLGILPLGF, HIAVTFAISMIVFISVTFIGF, FLHILLPQGTPMWLAPMMVLI, LAANMIAGHTIIKVIAGFVIN, IFLTPLPIAFIIILIGFEIFV, and AILQAYIFTVLTCVYLSDAVN.

The protein belongs to the ATPase A chain family. As to quaternary structure, F-type ATPases have 2 components, CF(1) - the catalytic core - and CF(0) - the membrane proton channel. CF(1) has five subunits: alpha(3), beta(3), gamma(1), delta(1), epsilon(1). CF(0) has three main subunits: a(1), b(2) and c(9-12). The alpha and beta chains form an alternating ring which encloses part of the gamma chain. CF(1) is attached to CF(0) by a central stalk formed by the gamma and epsilon chains, while a peripheral stalk is formed by the delta and b chains.

It is found in the cell inner membrane. Key component of the proton channel; it plays a direct role in the translocation of protons across the membrane. In Ehrlichia ruminantium (strain Welgevonden), this protein is ATP synthase subunit a.